Consider the following 218-residue polypeptide: Thiopurine S-methyltransferase (218 aa).

Residues Trp-10, Leu-45, Glu-66, and Arg-123 each coordinate S-adenosyl-L-methionine.

It belongs to the class I-like SAM-binding methyltransferase superfamily. TPMT family.

The protein resides in the cytoplasm. The enzyme catalyses S-adenosyl-L-methionine + a thiopurine = S-adenosyl-L-homocysteine + a thiopurine S-methylether.. This chain is Thiopurine S-methyltransferase, found in Shewanella putrefaciens (strain CN-32 / ATCC BAA-453).